The sequence spans 1074 residues: BRD4-interacting chromatin-remodeling complex-associated protein-like (1074 aa).

Disordered stretches follow at residues 542 to 603, 620 to 689, 834 to 874, and 887 to 952; these read AVSS…NTPG, TSPI…GQKR, TPLD…HDQF, and GNIS…SKLP. Composition is skewed to polar residues over residues 544–576, 591–603, 620–629, and 660–680; these read SSASTAHPTLGPTVQSGAPGSNFTGDQLTQANR, ASKSPSTLSNTPG, TSPIPTSKTT, and GATQAQPESSVGSSPSQTAVQ. Serine 621 is modified (phosphoserine). Composition is skewed to basic and acidic residues over residues 889 to 904, 913 to 925, and 934 to 948; these read ISKKSEGHSRTLKFDR, PPEDKGGRRDPAK, and EGHRKSLPRPDHGSE. Serine 976 is subject to Phosphoserine.

As to quaternary structure, component of the multiprotein chromatin-remodeling complexes SWI/SNF: SWI/SNF-A (BAF), SWI/SNF-B (PBAF) and related complexes. The canonical complex contains a catalytic subunit (either SMARCA4/BRG1/BAF190A or SMARCA2/BRM/BAF190B) and at least SMARCE1, ACTL6A/BAF53, SMARCC1/BAF155, SMARCC2/BAF170, and SMARCB1/SNF5/BAF47. Other subunits specific to each of the complexes may also be present permitting several possible combinations developmentally and tissue specific. Component of the SWI/SNF (GBAF) subcomplex, which includes at least BICRA or BICRAL (mutually exclusive), BRD9, SS18, the core BAF subunits, SMARCA2/BRM, SMARCA4/BRG1/BAF190A, ACTL6A/BAF53, SMARCC1/BAF155, and SMARCD1/BAF60A.

Its function is as follows. Component of SWI/SNF chromatin remodeling subcomplex GBAF that carries out key enzymatic activities, changing chromatin structure by altering DNA-histone contacts within a nucleosome in an ATP-dependent manner. This Mus musculus (Mouse) protein is BRD4-interacting chromatin-remodeling complex-associated protein-like.